The following is a 225-amino-acid chain: Cardiotrophin-like cytokine factor 1 (225 aa).

An N-terminal signal peptide occupies residues M1–A27. N29 carries N-linked (GlcNAc...) asparagine glycosylation.

It belongs to the IL-6 superfamily. Forms a heteromeric complex with cardiotrophin-like cytokine CRLF1/CLF-1; the CRLF1-CLCF1 complex is a ligand for the ciliary neurotrophic factor receptor/CNTFR. The CRLF1-CLCF1 heterodimer binds SORL1 (via N-terminal ectodomain); within this complex, the interaction is mediated predominantly by the CRLF1 moiety. The tripartite signaling complex formed by CRLF1, CLCF1 and CNTFR also binds SORL1.

The protein localises to the secreted. Its function is as follows. In complex with CRLF1, forms a heterodimeric neurotropic cytokine that plays a crucial role during neuronal development. Also stimulates B-cells. Binds to and activates the ILST/gp130 receptor. The chain is Cardiotrophin-like cytokine factor 1 (Clcf1) from Mus musculus (Mouse).